Consider the following 428-residue polypeptide: Enolase (428 aa).

Gln163 serves as a coordination point for (2R)-2-phosphoglycerate. Glu205 (proton donor) is an active-site residue. Residues Asp242, Glu286, and Asp313 each contribute to the Mg(2+) site. 4 residues coordinate (2R)-2-phosphoglycerate: Lys338, Arg367, Ser368, and Lys389. The active-site Proton acceptor is the Lys338.

This sequence belongs to the enolase family. Mg(2+) is required as a cofactor.

It is found in the cytoplasm. The protein resides in the secreted. Its subcellular location is the cell surface. It carries out the reaction (2R)-2-phosphoglycerate = phosphoenolpyruvate + H2O. It participates in carbohydrate degradation; glycolysis; pyruvate from D-glyceraldehyde 3-phosphate: step 4/5. In terms of biological role, catalyzes the reversible conversion of 2-phosphoglycerate (2-PG) into phosphoenolpyruvate (PEP). It is essential for the degradation of carbohydrates via glycolysis. This chain is Enolase, found in Acidovorax sp. (strain JS42).